Consider the following 137-residue polypeptide: Crustacean calcium-binding protein 23 (137 aa).

EF-hand domains follow at residues 27–48, 62–97, and 100–135; these read RDSSWTLSKEELSRGVSQFGLD, EKKAAVEAAFKHLDKTGDGVVTVEDIKGVYSAKVVK, and ATEEEILKKFLNMFESSTSVDGKVTKKEFLDYYSGL.

As to quaternary structure, monomer or disulfide-linked dimers.

Possibly acts as a regulatory protein and not as a calcium buffer or transport protein. This is Crustacean calcium-binding protein 23 from Homarus americanus (American lobster).